The chain runs to 606 residues: NADH-ubiquinone oxidoreductase chain 5 (606 aa).

15 consecutive transmembrane segments (helical) span residues 1–21, 43–63, 87–107, 117–137, 140–160, 171–191, 201–221, 241–261, 273–293, 310–330, 365–385, 409–429, 457–477, 488–508, and 582–602; these read MNMFSSCMITALVILTLPIIM, AFMISMIPTMMFIYSGQETIF, MIFVPVALFVTWSIMEFSMWY, FFKYLLLFLITMMVLVTANNM, LFIGWEGVGIMSFLLIGWWYG, AVLYNRIGDVGFIMTMAWFLL, IFITTNDNFNLPLLGLLLAAT, TPVSALLHSSTMVVAGVFLLI, IQTLTLCLGAITTLFTAICAL, LGLMMVTIGINQPYLAFLHIC, VLPFTTTSLIIGSLALTGMPF, LLITLVATSLTAAYSTRIMFF, LLIGSVFAGYIISHSITPTTI, MTALAVTILGFILALELNLTT, and GLIKLYFLSFMLTMILSLLIL.

This sequence belongs to the complex I subunit 5 family. As to quaternary structure, core subunit of respiratory chain NADH dehydrogenase (Complex I) which is composed of 45 different subunits.

It localises to the mitochondrion inner membrane. It catalyses the reaction a ubiquinone + NADH + 5 H(+)(in) = a ubiquinol + NAD(+) + 4 H(+)(out). Its function is as follows. Core subunit of the mitochondrial membrane respiratory chain NADH dehydrogenase (Complex I) which catalyzes electron transfer from NADH through the respiratory chain, using ubiquinone as an electron acceptor. Essential for the catalytic activity and assembly of complex I. The polypeptide is NADH-ubiquinone oxidoreductase chain 5 (MT-ND5) (Canis lupus familiaris (Dog)).